The chain runs to 269 residues: Thiazole synthase (269 aa).

Lysine 112 acts as the Schiff-base intermediate with DXP in catalysis. 1-deoxy-D-xylulose 5-phosphate contacts are provided by residues glycine 173, 199–200, and 221–222; these read AG and NT.

This sequence belongs to the ThiG family. In terms of assembly, homotetramer. Forms heterodimers with either ThiH or ThiS.

The protein resides in the cytoplasm. It catalyses the reaction [ThiS sulfur-carrier protein]-C-terminal-Gly-aminoethanethioate + 2-iminoacetate + 1-deoxy-D-xylulose 5-phosphate = [ThiS sulfur-carrier protein]-C-terminal Gly-Gly + 2-[(2R,5Z)-2-carboxy-4-methylthiazol-5(2H)-ylidene]ethyl phosphate + 2 H2O + H(+). It functions in the pathway cofactor biosynthesis; thiamine diphosphate biosynthesis. Its function is as follows. Catalyzes the rearrangement of 1-deoxy-D-xylulose 5-phosphate (DXP) to produce the thiazole phosphate moiety of thiamine. Sulfur is provided by the thiocarboxylate moiety of the carrier protein ThiS. In vitro, sulfur can be provided by H(2)S. This is Thiazole synthase from Caulobacter vibrioides (strain ATCC 19089 / CIP 103742 / CB 15) (Caulobacter crescentus).